We begin with the raw amino-acid sequence, 374 residues long: Queuine tRNA-ribosyltransferase (374 aa).

Asp-89 (proton acceptor) is an active-site residue. Residues 89-93 (DSGGF), Asp-143, Gln-187, and Gly-214 each bind substrate. The tract at residues 245-251 (GVGKPED) is RNA binding. Asp-264 functions as the Nucleophile in the catalytic mechanism. Residues 269–273 (TRNAR) are RNA binding; important for wobble base 34 recognition. Cys-302, Cys-304, Cys-307, and His-333 together coordinate Zn(2+).

Belongs to the queuine tRNA-ribosyltransferase family. In terms of assembly, homodimer. Within each dimer, one monomer is responsible for RNA recognition and catalysis, while the other monomer binds to the replacement base PreQ1. Zn(2+) serves as cofactor.

It carries out the reaction 7-aminomethyl-7-carbaguanine + guanosine(34) in tRNA = 7-aminomethyl-7-carbaguanosine(34) in tRNA + guanine. Its pathway is tRNA modification; tRNA-queuosine biosynthesis. Catalyzes the base-exchange of a guanine (G) residue with the queuine precursor 7-aminomethyl-7-deazaguanine (PreQ1) at position 34 (anticodon wobble position) in tRNAs with GU(N) anticodons (tRNA-Asp, -Asn, -His and -Tyr). Catalysis occurs through a double-displacement mechanism. The nucleophile active site attacks the C1' of nucleotide 34 to detach the guanine base from the RNA, forming a covalent enzyme-RNA intermediate. The proton acceptor active site deprotonates the incoming PreQ1, allowing a nucleophilic attack on the C1' of the ribose to form the product. After dissociation, two additional enzymatic reactions on the tRNA convert PreQ1 to queuine (Q), resulting in the hypermodified nucleoside queuosine (7-(((4,5-cis-dihydroxy-2-cyclopenten-1-yl)amino)methyl)-7-deazaguanosine). The polypeptide is Queuine tRNA-ribosyltransferase (Shewanella frigidimarina (strain NCIMB 400)).